The following is a 200-amino-acid chain: MKRYGIIGGTFDPIHYGHLYIAYEAKKQLSLDKIIFMPAGNPPHKEGKKITSAKLRYEMVKSSIKDFSGFSISKYEIEKKGFSYTYETLEHFKNNDVELFFITGADCLMDIEKWESSDKILSLSNLVVFSRGGFSNKELIKQKEYIEKKYHVSIILLTLKRLEISSTDIRERIKNKERVDFFVPQPIIKLIEENNLYKEE.

Belongs to the NadD family.

The enzyme catalyses nicotinate beta-D-ribonucleotide + ATP + H(+) = deamido-NAD(+) + diphosphate. It participates in cofactor biosynthesis; NAD(+) biosynthesis; deamido-NAD(+) from nicotinate D-ribonucleotide: step 1/1. In terms of biological role, catalyzes the reversible adenylation of nicotinate mononucleotide (NaMN) to nicotinic acid adenine dinucleotide (NaAD). The polypeptide is Probable nicotinate-nucleotide adenylyltransferase (Clostridium botulinum (strain Alaska E43 / Type E3)).